The sequence spans 178 residues: Nicotinamide-nucleotide adenylyltransferase (178 aa).

The protein belongs to the archaeal NMN adenylyltransferase family.

The protein resides in the cytoplasm. The catalysed reaction is beta-nicotinamide D-ribonucleotide + ATP + H(+) = diphosphate + NAD(+). It participates in cofactor biosynthesis; NAD(+) biosynthesis; NAD(+) from nicotinamide D-ribonucleotide: step 1/1. This Caldivirga maquilingensis (strain ATCC 700844 / DSM 13496 / JCM 10307 / IC-167) protein is Nicotinamide-nucleotide adenylyltransferase.